The primary structure comprises 79 residues: Small ribosomal subunit protein uS17 (79 aa).

Belongs to the universal ribosomal protein uS17 family. In terms of assembly, part of the 30S ribosomal subunit.

Its function is as follows. One of the primary rRNA binding proteins, it binds specifically to the 5'-end of 16S ribosomal RNA. This chain is Small ribosomal subunit protein uS17, found in Roseobacter denitrificans (strain ATCC 33942 / OCh 114) (Erythrobacter sp. (strain OCh 114)).